Here is a 142-residue protein sequence, read N- to C-terminus: Hemoglobin subunit alpha-1 (142 aa).

The residue at position 1 (S1) is an N-acetylserine. The Globin domain maps to 1–142 (SLSVKDKAAV…VALALAERYR (142 aa)). Residue H59 coordinates O2. H88 is a binding site for heme b.

The protein belongs to the globin family. In terms of assembly, hb 1 is a heterotetramer of two alpha-1 and two beta-1 chains. As to expression, red blood cells.

Its function is as follows. Involved in oxygen transport from gills to the various peripheral tissues. This chain is Hemoglobin subunit alpha-1 (hba1), found in Gobionotothen gibberifrons (Humped rockcod).